The chain runs to 272 residues: Centromere protein V-like protein 1 (272 aa).

The span at 1–17 (MGRVRNRATAQRRRRKR) shows a compositional bias: basic residues. 2 disordered regions span residues 1 to 23 (MGRV…DPPA) and 65 to 95 (RRVR…KDLD). Over residues 79–90 (APTPDPPGPAPS) the composition is skewed to pro residues. Residues 133–246 (HTGGCHCGAV…EEVGGGDPGE (114 aa)) form the CENP-V/GFA domain. Zn(2+) contacts are provided by C137, C139, C157, C159, C162, C201, and C204. The disordered stretch occupies residues 240–272 (GGGDPGEEAAEEHKAIHKTSSQSAPACPREQEQ).

It belongs to the Gfa family. It depends on Zn(2+) as a cofactor.

The protein is Centromere protein V-like protein 1 of Homo sapiens (Human).